A 187-amino-acid polypeptide reads, in one-letter code: Epididymal-specific lipocalin-10 (187 aa).

The N-terminal stretch at 1 to 19 is a signal peptide; it reads MRQGLLVLALVLVLVLVLA. A disulfide bridge links cysteine 90 with cysteine 163. Asparagine 149 is a glycosylation site (N-linked (GlcNAc...) asparagine). Lysine 170 is modified (N6-acetyllysine).

Belongs to the calycin superfamily. Lipocalin family.

It is found in the secreted. Functionally, may play a role in male fertility. May act as a retinoid carrier protein within the epididymis. In Homo sapiens (Human), this protein is Epididymal-specific lipocalin-10 (LCN10).